A 219-amino-acid chain; its full sequence is Small ribosomal subunit protein uS3 (219 aa).

The KH type-2 domain occupies 39 to 108 (IKEFIKKNYF…KVTVKVQEIK (70 aa)).

Belongs to the universal ribosomal protein uS3 family. Part of the 30S ribosomal subunit. Forms a tight complex with proteins S10 and S14.

Binds the lower part of the 30S subunit head. Binds mRNA in the 70S ribosome, positioning it for translation. In Fusobacterium nucleatum subsp. nucleatum (strain ATCC 25586 / DSM 15643 / BCRC 10681 / CIP 101130 / JCM 8532 / KCTC 2640 / LMG 13131 / VPI 4355), this protein is Small ribosomal subunit protein uS3.